Here is a 206-residue protein sequence, read N- to C-terminus: IMPACT family member HI_0722 (206 aa).

The protein belongs to the IMPACT family.

This is IMPACT family member HI_0722 from Haemophilus influenzae (strain ATCC 51907 / DSM 11121 / KW20 / Rd).